A 750-amino-acid polypeptide reads, in one-letter code: Photosystem I P700 chlorophyll a apoprotein A1 (750 aa).

A run of 8 helical transmembrane segments spans residues 70–93, 156–179, 195–219, 291–309, 346–369, 385–411, 433–455, and 531–549; these read VFSA…FHGA, LYCT…FHYH, LNHH…HVSL, IAHH…GHMY, WHAQ…HHMY, LSLF…IFMV, AIIS…LYIH, and FLVH…LILL. [4Fe-4S] cluster contacts are provided by cysteine 573 and cysteine 582. Helical transmembrane passes span 589-610 and 664-686; these read HVFL…HFSW and LSAY…MFLF. Position 675 (histidine 675) interacts with chlorophyll a'. Residues methionine 683 and tyrosine 691 each contribute to the chlorophyll a site. Tryptophan 692 provides a ligand contact to phylloquinone. A helical membrane pass occupies residues 724–744; it reads AVGVTHYLLGGIATTWAFFLA.

Belongs to the PsaA/PsaB family. In terms of assembly, the PsaA/B heterodimer binds the P700 chlorophyll special pair and subsequent electron acceptors. PSI consists of a core antenna complex that captures photons, and an electron transfer chain that converts photonic excitation into a charge separation. The eukaryotic PSI reaction center is composed of at least 11 subunits. It depends on P700 is a chlorophyll a/chlorophyll a' dimer, A0 is one or more chlorophyll a, A1 is one or both phylloquinones and FX is a shared 4Fe-4S iron-sulfur center. as a cofactor.

The protein resides in the plastid. It localises to the chloroplast thylakoid membrane. It catalyses the reaction reduced [plastocyanin] + hnu + oxidized [2Fe-2S]-[ferredoxin] = oxidized [plastocyanin] + reduced [2Fe-2S]-[ferredoxin]. Functionally, psaA and PsaB bind P700, the primary electron donor of photosystem I (PSI), as well as the electron acceptors A0, A1 and FX. PSI is a plastocyanin-ferredoxin oxidoreductase, converting photonic excitation into a charge separation, which transfers an electron from the donor P700 chlorophyll pair to the spectroscopically characterized acceptors A0, A1, FX, FA and FB in turn. Oxidized P700 is reduced on the lumenal side of the thylakoid membrane by plastocyanin. The protein is Photosystem I P700 chlorophyll a apoprotein A1 of Pelargonium hortorum (Common geranium).